The primary structure comprises 841 residues: mRNA export factor ICP27 homolog (841 aa).

Disordered regions lie at residues 12 to 82 (PFAG…QYDK) and 115 to 163 (RAQG…TSPD). Low complexity predominate over residues 32–49 (YSQQQSQHYYYGHNQSSY). Residues 66–79 (MPPPLSSPSSPPPQ) are compositionally biased toward pro residues. Over residues 132–147 (SSLVSSNNSNNNTTLS) the composition is skewed to low complexity. Residues Cys-298, His-411, Cys-413, and Cys-418 each coordinate Zn(2+). The CHC2-type zinc-finger motif lies at 298-418 (CLLDSPGGGG…PGHRCQNEIC (121 aa)). Disordered stretches follow at residues 444-749 (HPNG…DDLH) and 774-811 (SVTP…TDQP). Basic and acidic residues predominate over residues 495–507 (VDSRGGGGDRRGD). Residues 514–526 (NHHRHHTRRARTR) show a composition bias toward basic residues. Residues 553-563 (RRGEAQRESNG) show a composition bias toward basic and acidic residues. 2 stretches are compositionally biased toward low complexity: residues 568-579 (KSPSTVSSTTVH) and 591-603 (SRKS…QPET). The span at 614 to 623 (MPPPPSPCSP) shows a compositional bias: pro residues. Residues 641–657 (RPHDPPSGEPADAEKEL) show a composition bias toward basic and acidic residues. Positions 688–699 (DSSSSSSDSSSS) are enriched in low complexity. Residues 708–731 (EDCRELDLQSKRLEEALEERCERD) show a composition bias toward basic and acidic residues. 2 stretches are compositionally biased toward acidic residues: residues 732-749 (FEAD…DDLH) and 793-809 (DAEE…DETD).

This sequence belongs to the HHV-1 ICP27 protein family.

The protein localises to the virion tegument. It localises to the virion. It is found in the host nucleus. The protein resides in the host cytoplasm. Its function is as follows. Immediate early (EI) protein that plays many roles during productive infection including regulation of viral gene expression and nuclear export of intronless viral RNAs. The sequence is that of mRNA export factor ICP27 homolog from Mus musculus (Mouse).